We begin with the raw amino-acid sequence, 213 residues long: Peptide methionine sulfoxide reductase MsrA (213 aa).

Residue Cys53 is part of the active site.

Belongs to the MsrA Met sulfoxide reductase family.

The enzyme catalyses L-methionyl-[protein] + [thioredoxin]-disulfide + H2O = L-methionyl-(S)-S-oxide-[protein] + [thioredoxin]-dithiol. The catalysed reaction is [thioredoxin]-disulfide + L-methionine + H2O = L-methionine (S)-S-oxide + [thioredoxin]-dithiol. In terms of biological role, has an important function as a repair enzyme for proteins that have been inactivated by oxidation. Catalyzes the reversible oxidation-reduction of methionine sulfoxide in proteins to methionine. The polypeptide is Peptide methionine sulfoxide reductase MsrA (Serratia proteamaculans (strain 568)).